The sequence spans 42 residues: Photosystem II reaction center protein J (42 aa).

A helical transmembrane segment spans residues 10 to 30 (IPLWLIGTVVGSLAIGLLAIF).

This sequence belongs to the PsbJ family. As to quaternary structure, PSII is composed of 1 copy each of membrane proteins PsbA, PsbB, PsbC, PsbD, PsbE, PsbF, PsbH, PsbI, PsbJ, PsbK, PsbL, PsbM, PsbT, PsbX, PsbY, PsbZ, Psb30/Ycf12, at least 3 peripheral proteins of the oxygen-evolving complex and a large number of cofactors. It forms dimeric complexes.

Its subcellular location is the plastid. It is found in the chloroplast thylakoid membrane. Its function is as follows. One of the components of the core complex of photosystem II (PSII). PSII is a light-driven water:plastoquinone oxidoreductase that uses light energy to abstract electrons from H(2)O, generating O(2) and a proton gradient subsequently used for ATP formation. It consists of a core antenna complex that captures photons, and an electron transfer chain that converts photonic excitation into a charge separation. In Stigeoclonium helveticum (Green alga), this protein is Photosystem II reaction center protein J.